We begin with the raw amino-acid sequence, 86 residues long: Beta-toxin Tz1 (86 aa).

An N-terminal signal peptide occupies residues 1 to 20; sequence MTRFVLFICCFFLIGMVVEC. Positions 21–83 constitute an LCN-type CS-alpha/beta domain; that stretch reads KDGYLVGNDG…TWDRATNRCG (63 aa). Intrachain disulfides connect cysteine 31–cysteine 82, cysteine 35–cysteine 57, cysteine 43–cysteine 63, and cysteine 47–cysteine 65. Residue arginine 84 is modified to Arginine amide.

The protein belongs to the long (4 C-C) scorpion toxin superfamily. Sodium channel inhibitor family. Beta subfamily. In terms of tissue distribution, expressed by the venom gland.

Its subcellular location is the secreted. Functionally, beta toxins bind voltage-independently at site-4 of sodium channels (Nav) and shift the voltage of activation toward more negative potentials thereby affecting sodium channel activation and promoting spontaneous and repetitive firing. Strongly affects skeletal muscle channels Nav1.4/SCN4A, poorly affects the neuronal channels Nav1.6/SCN8A and Nav1.2/SCN2A. Induces spastic paralysis of rear limbs, increased salivation, apnea, tachycardia and increased perspiration. The protein is Beta-toxin Tz1 of Tityus zulianus (Venezuelan scorpion).